Here is a 254-residue protein sequence, read N- to C-terminus: DNA repair protein RecO (254 aa).

The protein belongs to the RecO family.

Involved in DNA repair and RecF pathway recombination. In Agrobacterium fabrum (strain C58 / ATCC 33970) (Agrobacterium tumefaciens (strain C58)), this protein is DNA repair protein RecO.